The following is a 783-amino-acid chain: Endonuclease MutS2 (783 aa).

Residue 333-340 (GPNTGGKT) coordinates ATP. A Smr domain is found at 708-783 (IDLRGKNIEE…GLGATFIYLK (76 aa)).

The protein belongs to the DNA mismatch repair MutS family. MutS2 subfamily. Homodimer. Binds to stalled ribosomes, contacting rRNA.

Endonuclease that is involved in the suppression of homologous recombination and thus may have a key role in the control of bacterial genetic diversity. In terms of biological role, acts as a ribosome collision sensor, splitting the ribosome into its 2 subunits. Detects stalled/collided 70S ribosomes which it binds and splits by an ATP-hydrolysis driven conformational change. Acts upstream of the ribosome quality control system (RQC), a ribosome-associated complex that mediates the extraction of incompletely synthesized nascent chains from stalled ribosomes and their subsequent degradation. Probably generates substrates for RQC. The protein is Endonuclease MutS2 of Finegoldia magna (strain ATCC 29328 / DSM 20472 / WAL 2508) (Peptostreptococcus magnus).